A 188-amino-acid polypeptide reads, in one-letter code: Peptidyl-tRNA hydrolase (188 aa).

Tyrosine 14 is a binding site for tRNA. The Proton acceptor role is filled by histidine 19. The tRNA site is built by tyrosine 64, asparagine 66, and asparagine 113.

The protein belongs to the PTH family. Monomer.

The protein localises to the cytoplasm. It carries out the reaction an N-acyl-L-alpha-aminoacyl-tRNA + H2O = an N-acyl-L-amino acid + a tRNA + H(+). In terms of biological role, hydrolyzes ribosome-free peptidyl-tRNAs (with 1 or more amino acids incorporated), which drop off the ribosome during protein synthesis, or as a result of ribosome stalling. Its function is as follows. Catalyzes the release of premature peptidyl moieties from peptidyl-tRNA molecules trapped in stalled 50S ribosomal subunits, and thus maintains levels of free tRNAs and 50S ribosomes. This is Peptidyl-tRNA hydrolase from Chloroflexus aurantiacus (strain ATCC 29364 / DSM 637 / Y-400-fl).